We begin with the raw amino-acid sequence, 420 residues long: Dihydrolipoyllysine-residue succinyltransferase component of 2-oxoglutarate dehydrogenase complex (420 aa).

The Lipoyl-binding domain maps to 1-76 (MAEVKVPELA…EVGQAVAVVG (76 aa)). At lysine 42 the chain carries N6-lipoyllysine. The segment at 75 to 201 (VGEGQVNTSN…EKMSRRKKTA (127 aa)) is disordered. Residues 81–90 (NTSNDSSNES) show a composition bias toward polar residues. Residues 91–102 (SQKDEAKEKETP) are compositionally biased toward basic and acidic residues. Residues 103–127 (KQSNPNSSESENTQDNSQQRINATP) show a composition bias toward polar residues. One can recognise a Peripheral subunit-binding (PSBD) domain in the interval 124–160 (NATPSARRHARKNGVDLSEVSGKGNDVLRKDDVENSQ). Basic and acidic residues predominate over residues 149–158 (DVLRKDDVEN). The span at 159 to 188 (SQKSSSQTAKSESKSQNSGSKQSNNNPSKP) shows a compositional bias: low complexity. Active-site residues include histidine 391 and aspartate 395.

The protein belongs to the 2-oxoacid dehydrogenase family. In terms of assembly, forms a 24-polypeptide structural core with octahedral symmetry. Part of the 2-oxoglutarate dehydrogenase (OGDH) complex composed of E1 (2-oxoglutarate dehydrogenase), E2 (dihydrolipoamide succinyltransferase) and E3 (dihydrolipoamide dehydrogenase); the complex contains multiple copies of the three enzymatic components (E1, E2 and E3). (R)-lipoate is required as a cofactor.

The enzyme catalyses N(6)-[(R)-dihydrolipoyl]-L-lysyl-[protein] + succinyl-CoA = N(6)-[(R)-S(8)-succinyldihydrolipoyl]-L-lysyl-[protein] + CoA. It participates in amino-acid degradation; L-lysine degradation via saccharopine pathway; glutaryl-CoA from L-lysine: step 6/6. Its function is as follows. E2 component of the 2-oxoglutarate dehydrogenase (OGDH) complex which catalyzes the second step in the conversion of 2-oxoglutarate to succinyl-CoA and CO(2). In Staphylococcus epidermidis (strain ATCC 12228 / FDA PCI 1200), this protein is Dihydrolipoyllysine-residue succinyltransferase component of 2-oxoglutarate dehydrogenase complex (odhB).